We begin with the raw amino-acid sequence, 173 residues long: MAIILGVDPGSRITGYGVIQCQGRHQIYLGSGCIRTSSEELSGRLKQIFDGITEIIRQYQPDEFAIERVFMAKNADSALKLGQARGAAIVAATVANLPVAEYSATQIKSAVVGTGRAKKEQIQHMIQQLLKLPAAPQADAADALGVAVCHYHTRQSLIALSGRATARTYGRYR.

Catalysis depends on residues Asp-8, Glu-67, and Asp-139. The Mg(2+) site is built by Asp-8, Glu-67, and Asp-139.

Belongs to the RuvC family. In terms of assembly, homodimer which binds Holliday junction (HJ) DNA. The HJ becomes 2-fold symmetrical on binding to RuvC with unstacked arms; it has a different conformation from HJ DNA in complex with RuvA. In the full resolvosome a probable DNA-RuvA(4)-RuvB(12)-RuvC(2) complex forms which resolves the HJ. It depends on Mg(2+) as a cofactor.

The protein localises to the cytoplasm. It carries out the reaction Endonucleolytic cleavage at a junction such as a reciprocal single-stranded crossover between two homologous DNA duplexes (Holliday junction).. In terms of biological role, the RuvA-RuvB-RuvC complex processes Holliday junction (HJ) DNA during genetic recombination and DNA repair. Endonuclease that resolves HJ intermediates. Cleaves cruciform DNA by making single-stranded nicks across the HJ at symmetrical positions within the homologous arms, yielding a 5'-phosphate and a 3'-hydroxyl group; requires a central core of homology in the junction. The consensus cleavage sequence is 5'-(A/T)TT(C/G)-3'. Cleavage occurs on the 3'-side of the TT dinucleotide at the point of strand exchange. HJ branch migration catalyzed by RuvA-RuvB allows RuvC to scan DNA until it finds its consensus sequence, where it cleaves and resolves the cruciform DNA. The protein is Crossover junction endodeoxyribonuclease RuvC of Shewanella putrefaciens (strain CN-32 / ATCC BAA-453).